A 388-amino-acid chain; its full sequence is Succinate--CoA ligase [ADP-forming] subunit beta (388 aa).

The 236-residue stretch at 9–244 (KELFARRGLP…VTQEDAREAH (236 aa)) folds into the ATP-grasp domain. ATP-binding positions include K46, 53–55 (GRG), E99, T102, and E107. Residues N199 and D213 each contribute to the Mg(2+) site. Residues N264 and 321 to 323 (GIV) contribute to the substrate site.

This sequence belongs to the succinate/malate CoA ligase beta subunit family. Heterotetramer of two alpha and two beta subunits. Requires Mg(2+) as cofactor.

The catalysed reaction is succinate + ATP + CoA = succinyl-CoA + ADP + phosphate. The enzyme catalyses GTP + succinate + CoA = succinyl-CoA + GDP + phosphate. Its pathway is carbohydrate metabolism; tricarboxylic acid cycle; succinate from succinyl-CoA (ligase route): step 1/1. Its function is as follows. Succinyl-CoA synthetase functions in the citric acid cycle (TCA), coupling the hydrolysis of succinyl-CoA to the synthesis of either ATP or GTP and thus represents the only step of substrate-level phosphorylation in the TCA. The beta subunit provides nucleotide specificity of the enzyme and binds the substrate succinate, while the binding sites for coenzyme A and phosphate are found in the alpha subunit. This Hamiltonella defensa subsp. Acyrthosiphon pisum (strain 5AT) protein is Succinate--CoA ligase [ADP-forming] subunit beta.